The chain runs to 180 residues: Stathmin-3 (180 aa).

Residues cysteine 22 and cysteine 24 are each lipidated (S-palmitoyl cysteine). In terms of domain architecture, SLD spans 38–180 (GDMEVKQLDK…NKEQREEMSG (143 aa)). 7 positions are modified to phosphoserine: serine 50, serine 60, serine 65, serine 68, serine 72, serine 73, and serine 81. The interval 58 to 82 (LKSPSDLSPESPMLSSPPKRKDTSL) is disordered. Low complexity predominate over residues 60 to 74 (SPSDLSPESPMLSSP). The stretch at 76–179 (KRKDTSLEEL…RNKEQREEMS (104 aa)) forms a coiled coil.

It belongs to the stathmin family. As to quaternary structure, interacts with STAT3. Interacts with CLU (secreted form); this interaction may act as an important modulator during neuronal differentiation. Post-translationally, N-terminal palmitoylation promotes specific anchoring to the cytosolic leaflet of Golgi membranes and subsequent vesicular trafficking along dendrites and axons. Neuronal Stathmins are substrates for palmitoyltransferases ZDHHC3, ZDHHC7 and ZDHHC15.

It localises to the golgi apparatus. The protein resides in the cell projection. The protein localises to the growth cone. Its subcellular location is the axon. It is found in the cytoplasm. It localises to the cytosol. Exhibits microtubule-destabilizing activity, which is antagonized by STAT3. The sequence is that of Stathmin-3 (STMN3) from Bos taurus (Bovine).